We begin with the raw amino-acid sequence, 132 residues long: Small ribosomal subunit protein uS8 (132 aa).

Belongs to the universal ribosomal protein uS8 family. In terms of assembly, part of the 30S ribosomal subunit. Contacts proteins S5 and S12.

Functionally, one of the primary rRNA binding proteins, it binds directly to 16S rRNA central domain where it helps coordinate assembly of the platform of the 30S subunit. In Bartonella henselae (strain ATCC 49882 / DSM 28221 / CCUG 30454 / Houston 1) (Rochalimaea henselae), this protein is Small ribosomal subunit protein uS8.